A 414-amino-acid polypeptide reads, in one-letter code: MEMQQNCSISCFWETQPLGCVKISCIFYHSKPRNINGLFLPPSSNITLQKEIQEGIPLQSQSQEPLKPQENISRPIHHPLVLKTNFEEEEEVDEQNDASSLWTKTPEEIEEKRAIKEMCYKSGEYYRFHTPPDILSSKSMTPTAEKQLEKPLENGSELQEGDSLTVPTKLSQYERQGEIKTSLHGKPKTDIAAFENGGGDCYVPQRVIFLGVDESEALTEEKEITISKCSNTKDNKDSPHPKHSLTTRLVPTTHVLNATENISMKCREDPSSMNDVQPVKKPHFKGVKKRKWIYDEPQNFPNSGMQRAVQAPRPQNKMSYHRNNKNRNAENASYIHVQRDAVRTVALNAPSRSRPTHGSYNKVHANREPKPNLSPDKYTSTSYNDSAWRKRIPFSKTYSKSEKIYPEPRRNGSK.

Disordered regions lie at residues 136 to 168 (SSKS…TVPT), 297 to 333 (PQNF…ENAS), and 346 to 414 (ALNA…NGSK). A compositionally biased stretch (polar residues) spans 350 to 359 (PSRSRPTHGS). Residues 399–414 (SKSEKIYPEPRRNGSK) show a composition bias toward basic and acidic residues.

This is an uncharacterized protein from Homo sapiens (Human).